The primary structure comprises 606 residues: Aspartate--tRNA(Asp/Asn) ligase (606 aa).

An L-aspartate-binding site is contributed by E196. Positions 220–223 (QIFK) are aspartate. Residue R242 participates in L-aspartate binding. ATP is bound by residues 242-244 (RDE) and Q251. H465 contributes to the L-aspartate binding site. ATP is bound at residue E499. R506 is an L-aspartate binding site. ATP is bound at residue 551-554 (GMDR).

The protein belongs to the class-II aminoacyl-tRNA synthetase family. Type 1 subfamily. Homodimer.

It localises to the cytoplasm. The enzyme catalyses tRNA(Asx) + L-aspartate + ATP = L-aspartyl-tRNA(Asx) + AMP + diphosphate. Aspartyl-tRNA synthetase with relaxed tRNA specificity since it is able to aspartylate not only its cognate tRNA(Asp) but also tRNA(Asn). Reaction proceeds in two steps: L-aspartate is first activated by ATP to form Asp-AMP and then transferred to the acceptor end of tRNA(Asp/Asn). The chain is Aspartate--tRNA(Asp/Asn) ligase from Oleidesulfovibrio alaskensis (strain ATCC BAA-1058 / DSM 17464 / G20) (Desulfovibrio alaskensis).